The primary structure comprises 2179 residues: Genome polyprotein (2179 aa).

Disordered stretches follow at residues Phe503–Asp531, Gln623–Gln678, Arg703–Phe738, and Glu753–Met847. Polar residues-rich tracts occupy residues Asp630–His642 and Thr659–Gln678. Polar residues predominate over residues Ser758–Glu770. Positions Ser783–Thr806 are enriched in low complexity. Over residues Glu819–Thr831 the composition is skewed to acidic residues. The CCHC-type zinc-finger motif lies at Cys1112 to Cys1125. The active-site For protease activity; shared with dimeric partner is Asp1226. A Reverse transcriptase domain is found at Gln1409–Phe1591. Asp1479, Asp1542, and Asp1543 together coordinate Mg(2+). Disordered stretches follow at residues Gln1822–His1848, Asn2114–Cys2144, and Tyr2160–Val2179. Over residues Ser1827–Thr1840 the composition is skewed to low complexity. A compositionally biased stretch (basic residues) spans Pro2120–Cys2144. Residues Thr2162 to Val2179 show a composition bias toward polar residues.

The protein belongs to the Petuviruses genome polyprotein family.

It carries out the reaction DNA(n) + a 2'-deoxyribonucleoside 5'-triphosphate = DNA(n+1) + diphosphate. Its function is as follows. Encodes presumably for at least four polypeptides: Movement protein (MP), capsid protein (CP), Protease (PR), and reverse transcriptase (RT). The chain is Genome polyprotein from Petunia vein clearing virus (isolate Shepherd) (PVCV).